The chain runs to 404 residues: O-methyltransferase GME11366 (404 aa).

Residues 237–238, aspartate 262, arginine 301, and arginine 302 each bind S-adenosyl-L-methionine; that span reads GG. The active-site Proton acceptor is histidine 305.

Belongs to the class I-like SAM-binding methyltransferase superfamily. Cation-independent O-methyltransferase family.

The protein operates within secondary metabolite biosynthesis. Functionally, O-methyltransferase; part of the gene cluster that mediates the biosynthesis of dibenzodioxocinones such as pestalotiollide B, a novel class of inhibitors against cholesterol ester transfer protein (CEPT). The biosynthesis initiates from condensation of acetate and malonate units catalyzed by the non-reducing PKS pks8/GME11356. Pks8/GME11356 lacks a thioesterase (TE) domain, which is important to the cyclizing of the third ring of atrochrysone carboxylic acid, and the esterase GME11355 might play the role of TE and catalyzes the cyclization reaction of the C ring. The lactamase-like protein GME11357 (or other beta-lactamases in Pestalotiopsis microspora) probably hydrolyzes the thioester bond between the ACP of pks8/GME11356 and the intermediate to release atrochrysone carboxylic acid, which is spontaneously dehydrates to form endocrocin anthrone. Endocrocin anthrone is further converted to emodin via the endocrocin intermediate. Emodin is then oxidized by several enzymes such as the Baeyer-Villiger oxidase GME11358, the oxidoreductase GME11367, the short chain dehydrogenase/reductase GME11373, as well as by other oxidoreductases from the cluster, to modify the A and C rings and open the B ring, and finally yield monodictyphenone. The prenyltransferase GME11375 may catalyze the addition reaction between the C5 side chains and the carbon bone of dibenzodioxocinones. The remaining biochemical reactions to the final product dibenzodioxocinones should be methylation catalyzed by methyltransferase GME11366 and reduction and lactonization reaction catalyzed by a series of oxidordeuctases. The polypeptide is O-methyltransferase GME11366 (Pestalotiopsis microspora).